The chain runs to 63 residues: Metallothionein-1 (63 aa).

Repeats lie at residues 23 to 30 (CGDKCECK) and 56 to 63 (CGDKCECK).

The protein belongs to the metallothionein superfamily. Type 9 family.

In terms of biological role, the metallothioneins are involved in the cellular sequestration of toxic metal ions. This chain is Metallothionein-1 (MT-I), found in Candida glabrata (strain ATCC 2001 / BCRC 20586 / JCM 3761 / NBRC 0622 / NRRL Y-65 / CBS 138) (Yeast).